We begin with the raw amino-acid sequence, 487 residues long: GTPase Der (487 aa).

The 165-residue stretch at 2–166 folds into the EngA-type G 1 domain; that stretch reads LKIAILGRPN…RIKLVANLPE (165 aa). GTP-binding positions include 8–15, 55–59, and 118–121; these read GRPNVGKS, DTGGV, and NKAD. The segment at 165-194 is disordered; it reads PEPREEEEEGLEELSVDEHEESEAALPSNT. A compositionally biased stretch (acidic residues) spans 168–187; sequence REEEEEGLEELSVDEHEESE. One can recognise an EngA-type G 2 domain in the interval 225–398; the sequence is LKIALIGRPN…AIDELHHVVS (174 aa). Residues 231–238, 278–282, and 343–346 contribute to the GTP site; these read GRPNVGKS, DTAGL, and NKWD. Residues 399–483 enclose the KH-like domain; the sequence is NKVPTPIVNK…PFDLEFKEKP (85 aa).

This sequence belongs to the TRAFAC class TrmE-Era-EngA-EngB-Septin-like GTPase superfamily. EngA (Der) GTPase family. As to quaternary structure, associates with the 50S ribosomal subunit.

GTPase that plays an essential role in the late steps of ribosome biogenesis. The polypeptide is GTPase Der (Chlamydia pneumoniae (Chlamydophila pneumoniae)).